Consider the following 472-residue polypeptide: UDP-N-acetylmuramate--L-alanine ligase (472 aa).

122–128 (GSHGKTT) is a binding site for ATP.

The protein belongs to the MurCDEF family.

The protein localises to the cytoplasm. It carries out the reaction UDP-N-acetyl-alpha-D-muramate + L-alanine + ATP = UDP-N-acetyl-alpha-D-muramoyl-L-alanine + ADP + phosphate + H(+). Its pathway is cell wall biogenesis; peptidoglycan biosynthesis. Its function is as follows. Cell wall formation. The sequence is that of UDP-N-acetylmuramate--L-alanine ligase from Prochlorococcus marinus (strain SARG / CCMP1375 / SS120).